Reading from the N-terminus, the 211-residue chain is SOSS complex subunit B2 (211 aa).

A DNA-binding region (OB) is located at residues I27–L97. The interval N125–R211 is disordered. The span at G136–A157 shows a compositional bias: polar residues. Positions N179 to P195 are enriched in pro residues.

It belongs to the SOSS-B family. SOSS-B2 subfamily. Component of the SOSS complex, composed of soss-b (soss-b1/nabp2 or soss-b2/nabp1), soss-a/ints3 and soss-c/inip. SOSS complexes containing soss-b1/nabp2 are more abundant than complexes containing soss-b2/nabp1.

It localises to the nucleus. Functionally, component of the SOSS complex, a multiprotein complex that functions downstream of the MRN complex to promote DNA repair and G2/M checkpoint. In the SOSS complex, acts as a sensor of single-stranded DNA that binds to single-stranded DNA. The SOSS complex associates with DNA lesions and influences diverse endpoints in the cellular DNA damage response including cell-cycle checkpoint activation, recombinational repair and maintenance of genomic stability. Required for efficient homologous recombination-dependent repair of double-strand breaks (DSBs). This Danio rerio (Zebrafish) protein is SOSS complex subunit B2 (nabp1).